The chain runs to 332 residues: GTPase Obg (332 aa).

One can recognise an Obg domain in the interval 1-159; the sequence is MKFLDQAKIY…RWVWLRLKLI (159 aa). One can recognise an OBG-type G domain in the interval 160-328; it reads ADAGLVGLPN…VLRETLRMIR (169 aa). GTP-binding positions include 166-173, 191-195, 213-216, 280-283, and 309-311; these read GLPNAGKS, FTTLH, DIPG, NKMD, and SAA. Residues Ser-173 and Thr-193 each coordinate Mg(2+).

This sequence belongs to the TRAFAC class OBG-HflX-like GTPase superfamily. OBG GTPase family. In terms of assembly, monomer. Requires Mg(2+) as cofactor.

Its subcellular location is the cytoplasm. An essential GTPase which binds GTP, GDP and possibly (p)ppGpp with moderate affinity, with high nucleotide exchange rates and a fairly low GTP hydrolysis rate. Plays a role in control of the cell cycle, stress response, ribosome biogenesis and in those bacteria that undergo differentiation, in morphogenesis control. The protein is GTPase Obg of Acidiphilium cryptum (strain JF-5).